A 197-amino-acid polypeptide reads, in one-letter code: MKIKSSEFIISAVKREQYPDDNLPEIAFVGRSNVGKSSIINSLTNRRGLAKVSQTPGKTRLINFFLLNKDFYLVDLPGYGYAKVSKKEKASWGATIERYLLNRGPLKKVVLLVDCRHKPTADDVQMYEWIKHYGYEVVVIATKSDKISNNQIGKSEKLIKETLGLPKDYKLKFFSSLNKKGKDELVDYLFDDLVEEI.

An EngB-type G domain is found at 22–195 (NLPEIAFVGR…VDYLFDDLVE (174 aa)). GTP-binding positions include 30-37 (GRSNVGKS), 57-61 (GKTRL), 75-78 (DLPG), 142-145 (TKSD), and 174-176 (FSS). Mg(2+) is bound by residues S37 and T59.

The protein belongs to the TRAFAC class TrmE-Era-EngA-EngB-Septin-like GTPase superfamily. EngB GTPase family. Mg(2+) is required as a cofactor.

Necessary for normal cell division and for the maintenance of normal septation. The sequence is that of Probable GTP-binding protein EngB from Clostridium perfringens (strain SM101 / Type A).